The following is a 106-amino-acid chain: Nucleoid-associated protein RPA0616 (106 aa).

The protein belongs to the YbaB/EbfC family. In terms of assembly, homodimer.

The protein resides in the cytoplasm. Its subcellular location is the nucleoid. In terms of biological role, binds to DNA and alters its conformation. May be involved in regulation of gene expression, nucleoid organization and DNA protection. This Rhodopseudomonas palustris (strain ATCC BAA-98 / CGA009) protein is Nucleoid-associated protein RPA0616.